Reading from the N-terminus, the 739-residue chain is Phosphoribosylformylglycinamidine synthase subunit PurL (739 aa).

His-54 is an active-site residue. ATP is bound by residues Tyr-57 and Lys-96. Glu-98 lines the Mg(2+) pocket. Residues 99 to 102 (SHNH) and Arg-121 contribute to the substrate site. His-100 (proton acceptor) is an active-site residue. A Mg(2+)-binding site is contributed by Asp-122. Gln-245 is a substrate binding site. Residue Asp-273 coordinates Mg(2+). 317-319 (ESQ) serves as a coordination point for substrate. Positions 500 and 537 each coordinate ATP. Asn-538 lines the Mg(2+) pocket. Ser-540 is a binding site for substrate.

It belongs to the FGAMS family. In terms of assembly, monomer. Part of the FGAM synthase complex composed of 1 PurL, 1 PurQ and 2 PurS subunits.

Its subcellular location is the cytoplasm. The enzyme catalyses N(2)-formyl-N(1)-(5-phospho-beta-D-ribosyl)glycinamide + L-glutamine + ATP + H2O = 2-formamido-N(1)-(5-O-phospho-beta-D-ribosyl)acetamidine + L-glutamate + ADP + phosphate + H(+). The protein operates within purine metabolism; IMP biosynthesis via de novo pathway; 5-amino-1-(5-phospho-D-ribosyl)imidazole from N(2)-formyl-N(1)-(5-phospho-D-ribosyl)glycinamide: step 1/2. Part of the phosphoribosylformylglycinamidine synthase complex involved in the purines biosynthetic pathway. Catalyzes the ATP-dependent conversion of formylglycinamide ribonucleotide (FGAR) and glutamine to yield formylglycinamidine ribonucleotide (FGAM) and glutamate. The FGAM synthase complex is composed of three subunits. PurQ produces an ammonia molecule by converting glutamine to glutamate. PurL transfers the ammonia molecule to FGAR to form FGAM in an ATP-dependent manner. PurS interacts with PurQ and PurL and is thought to assist in the transfer of the ammonia molecule from PurQ to PurL. This is Phosphoribosylformylglycinamidine synthase subunit PurL from Exiguobacterium sp. (strain ATCC BAA-1283 / AT1b).